Reading from the N-terminus, the 294-residue chain is C-type lectin domain family 4 member G (294 aa).

Residues 1–30 (MNTGEYNKLGSAIEEVSRGQLGRWECYKQR) are Cytoplasmic-facing. The helical; Signal-anchor for type II membrane protein transmembrane segment at 31 to 51 (LFFLVLALLVATVLWALILST) threads the bilayer. At 52 to 294 (LLSSASSKLR…WICEKRSSCY (243 aa)) the chain is on the extracellular side. The N-linked (GlcNAc...) asparagine glycan is linked to Asn73. Positions 100–151 (AQLQTTLAEFKDIQAKLMEQESILKELQERVTQDLAKASRDRENIRSELFQA) form a coiled coil. Residues Asn159, Asn246, and Asn256 are each glycosylated (N-linked (GlcNAc...) asparagine). Residues 172–287 (FQGSCYYFSE…CTNERDGWIC (116 aa)) form the C-type lectin domain. Cys264 and Cys278 form a disulfide bridge.

It localises to the cell membrane. Functionally, binds mannose, N-acetylglucosamine (GlcNAc) and fucose, but not galactose, in a Ca(2+)-dependent manner. The sequence is that of C-type lectin domain family 4 member G (Clec4g) from Mus musculus (Mouse).